The chain runs to 75 residues: Protein myomixer (75 aa).

The Cytoplasmic portion of the chain corresponds to 1-5 (MPAVF). The helical transmembrane segment at 6-28 (LLLRSLVVRLFGSRLAASGVQLL) threads the bilayer. Residues 29-75 (RRILTTATGHLGTVLRNIWERISSQQSKEAILGCVLCLLNMHKKVDN) are Extracellular-facing. The AxLyCxL signature appears at 58–67 (AILGCVLCLL).

The protein belongs to the MYMX family. Specifically expressed in the developing myotome.

The protein localises to the cell membrane. In terms of biological role, myoblast-specific protein that mediates myoblast fusion, an essential step for the formation of multi-nucleated muscle fibers. Involved in membrane fusion downstream of the lipid mixing step mediated by mymk. Acts by generating membrane stresses via its extracellular C-terminus, leading to drive fusion pore formation. The protein is Protein myomixer of Danio rerio (Zebrafish).